A 326-amino-acid polypeptide reads, in one-letter code: Biotin synthase (326 aa).

One can recognise a Radical SAM core domain in the interval 47 to 274 (NEVQVSSLLS…ASRVRLSAGR (228 aa)). Residues C62, C66, and C69 each coordinate [4Fe-4S] cluster. [2Fe-2S] cluster is bound by residues C106, C137, C197, and R269.

It belongs to the radical SAM superfamily. Biotin synthase family. As to quaternary structure, homodimer. It depends on [4Fe-4S] cluster as a cofactor. [2Fe-2S] cluster is required as a cofactor.

It carries out the reaction (4R,5S)-dethiobiotin + (sulfur carrier)-SH + 2 reduced [2Fe-2S]-[ferredoxin] + 2 S-adenosyl-L-methionine = (sulfur carrier)-H + biotin + 2 5'-deoxyadenosine + 2 L-methionine + 2 oxidized [2Fe-2S]-[ferredoxin]. Its pathway is cofactor biosynthesis; biotin biosynthesis; biotin from 7,8-diaminononanoate: step 2/2. Its function is as follows. Catalyzes the conversion of dethiobiotin (DTB) to biotin by the insertion of a sulfur atom into dethiobiotin via a radical-based mechanism. This chain is Biotin synthase, found in Methylococcus capsulatus (strain ATCC 33009 / NCIMB 11132 / Bath).